A 284-amino-acid chain; its full sequence is Protein Ku (284 aa).

The Ku domain maps to 10 to 189 (TIGLVTVPVK…ELRSTEGIVP (180 aa)).

As to quaternary structure, homodimer. Interacts with host LigD.

Functionally, required for replication of viruses with short cos ends (4 bases). Stimulates dsDNA end-joining by host LigD. Binds dsDNA with either blunt, 5'- or 3-overhangs, protecting it from host exonuclease degradation. The protein is Protein Ku (87) of Mycobacterium phage Corndog (Mycobacteriophage Corndog).